A 602-amino-acid polypeptide reads, in one-letter code: Elongation factor 4 (602 aa).

One can recognise a tr-type G domain in the interval 7 to 189 (KFIRNFSIIA…QLVVAIPPPV (183 aa)). GTP contacts are provided by residues 19 to 24 (DHGKST) and 136 to 139 (NKID).

The protein belongs to the TRAFAC class translation factor GTPase superfamily. Classic translation factor GTPase family. LepA subfamily.

Its subcellular location is the cell inner membrane. The catalysed reaction is GTP + H2O = GDP + phosphate + H(+). Its function is as follows. Required for accurate and efficient protein synthesis under certain stress conditions. May act as a fidelity factor of the translation reaction, by catalyzing a one-codon backward translocation of tRNAs on improperly translocated ribosomes. Back-translocation proceeds from a post-translocation (POST) complex to a pre-translocation (PRE) complex, thus giving elongation factor G a second chance to translocate the tRNAs correctly. Binds to ribosomes in a GTP-dependent manner. This is Elongation factor 4 from Coxiella burnetii (strain Dugway 5J108-111).